Here is a 386-residue protein sequence, read N- to C-terminus: AT-hook motif nuclear-localized protein 8 (386 aa).

Disordered regions lie at residues 1–175 and 303–372; these read MDSR…LGGT and KQSS…LHPH. Residues 54–70 show a composition bias toward low complexity; the sequence is QQQSQTFHQQQQQQMDQ. Basic residues predominate over residues 101 to 110; that stretch reads VKKKRGRPRK. A Bipartite nuclear localization signal motif is present at residues 102–110; it reads KKKRGRPRK. Residues 102–114 constitute a DNA-binding region (a.T hook 1); that stretch reads KKKRGRPRKYTPD. Polar residues predominate over residues 126-135; sequence PLLSAASNSY. Residues 136–147 are compositionally biased toward gly residues; that stretch reads GEGGVGDSGGNG. Residues 155–167 constitute a DNA-binding region (a.T hook 2); the sequence is KRNRGRPPGSSKK. A PPC domain is found at 174–316; sequence GTSGVGFTPH…VNIARGQNPE (143 aa). Low complexity-rich tracts occupy residues 328-337 and 361-372; these read GSVSQGPSSE and QQQQQQQPLHPH.

Its subcellular location is the nucleus. Functionally, transcription factor that specifically binds AT-rich DNA sequences related to the nuclear matrix attachment regions (MARs). This is AT-hook motif nuclear-localized protein 8 from Arabidopsis thaliana (Mouse-ear cress).